A 396-amino-acid chain; its full sequence is Transcription factor E2FC (396 aa).

Polar residues predominate over residues 34–48 (PRYSSLTPSSTNRPF). The tract at residues 34–57 (PRYSSLTPSSTNRPFSVSQSLPNS) is disordered. A DNA-binding region spans residues 155 to 220 (RYDSSLGLLT…TTKNHIRWKG (66 aa)). Residues 226–268 (QKDLGDQISRLKSEVESMQSEESRLDDLIRERQEALRSLEEDD) are a coiled coil. The leucine-zipper stretch occupies residues 236–264 (LKSEVESMQSEESRLDDLIRERQEALRSL). The segment at 376 to 391 (DYWFESDAEVSLTDLW) is retinoblastoma protein binding.

Belongs to the E2F/DP family. In terms of assembly, heterodimer with DP proteins. Interacts preferentially with DPB, but also with DPA. No interaction with DPB when phosphorylated. Interacts with SKP2A, CDKA-1 and maize retinoblastoma-related protein RBR1. Component of a DREAM-like complex which modulates a variety of developmentally regulated genes and of the mitotic genes in proliferating and differentiated cells. Interacts with MYB3R3 at later stages of leaves development. Phosphorylated by cyclin-dependent kinase. Phosphorylation is necessary to target E2FC for proteolysis. Expressed in meristematic areas, vascular tissues, apical part of the roots, cotyledons, upper region of the hypocotyls, trichomes, young flower buds and pollen grains.

Its subcellular location is the cytoplasm. Functionally, involved in transcriptional repression. May act by repressing E2F-regulated genes in mature differentiated cells, but is not an antagonist of E2FA. Restricts cell division and is involved in the coordination between cell proliferation and endoreduplication during development. May play a role during the transition from skotomorphogenesis to photomorphogenesis. Regulated by phosphorylation-dependent proteolysis via the protein-ubiquitin ligase SCF(SKP2A) complex. The protein is Transcription factor E2FC (E2FC) of Arabidopsis thaliana (Mouse-ear cress).